The sequence spans 310 residues: Protoheme IX farnesyltransferase (310 aa).

A run of 9 helical transmembrane segments spans residues 31-51 (VMSL…DSIH), 52-72 (PLIA…AGAM), 102-119 (ALSF…FMAL), 123-145 (ILAS…IWLK), 151-171 (NIVI…AAVS), 179-199 (IILF…IALF), 225-245 (ILIY…IGMN), 248-268 (IYLI…FSLF), and 281-301 (FTYS…TSTI).

Belongs to the UbiA prenyltransferase family. Protoheme IX farnesyltransferase subfamily.

It is found in the cell inner membrane. It catalyses the reaction heme b + (2E,6E)-farnesyl diphosphate + H2O = Fe(II)-heme o + diphosphate. It functions in the pathway porphyrin-containing compound metabolism; heme O biosynthesis; heme O from protoheme: step 1/1. Functionally, converts heme B (protoheme IX) to heme O by substitution of the vinyl group on carbon 2 of heme B porphyrin ring with a hydroxyethyl farnesyl side group. The polypeptide is Protoheme IX farnesyltransferase (Rickettsia prowazekii (strain Madrid E)).